The primary structure comprises 112 residues: UPF0329 protein ECU11_0080 (112 aa).

This sequence belongs to the UPF0329 family.

In Encephalitozoon cuniculi (strain GB-M1) (Microsporidian parasite), this protein is UPF0329 protein ECU11_0080.